A 323-amino-acid chain; its full sequence is Ribose 1,5-bisphosphate isomerase (323 aa).

Substrate contacts are provided by residues 22–25 (RGAA) and arginine 65. The active-site Proton acceptor is cysteine 130. Aspartate 199 serves as the catalytic Proton donor. Substrate contacts are provided by residues 209–210 (NK) and lysine 235. Lysine 210 participates in a covalent cross-link: Glycyl lysine isopeptide (Lys-Gly) (interchain with G-Cter in SAMP2).

Belongs to the eIF-2B alpha/beta/delta subunits family. R15P isomerase subfamily.

The enzyme catalyses alpha-D-ribose 1,5-bisphosphate = D-ribulose 1,5-bisphosphate. In terms of biological role, catalyzes the isomerization of ribose 1,5-bisphosphate (R15P) to ribulose 1,5-bisphosphate (RuBP), the CO(2) acceptor and substrate for RubisCO. Functions in an archaeal AMP degradation pathway, together with AMP phosphorylase and RubisCO. This is Ribose 1,5-bisphosphate isomerase from Haloferax volcanii (strain ATCC 29605 / DSM 3757 / JCM 8879 / NBRC 14742 / NCIMB 2012 / VKM B-1768 / DS2) (Halobacterium volcanii).